The primary structure comprises 250 residues: Triosephosphate isomerase (250 aa).

Residue 9–11 (NWK) participates in substrate binding. His96 functions as the Electrophile in the catalytic mechanism. Catalysis depends on Glu168, which acts as the Proton acceptor. Residues Gly174, Ser216, and 237–238 (GG) contribute to the substrate site.

The protein belongs to the triosephosphate isomerase family. In terms of assembly, homodimer.

It localises to the cytoplasm. The enzyme catalyses D-glyceraldehyde 3-phosphate = dihydroxyacetone phosphate. Its pathway is carbohydrate biosynthesis; gluconeogenesis. It participates in carbohydrate degradation; glycolysis; D-glyceraldehyde 3-phosphate from glycerone phosphate: step 1/1. Involved in the gluconeogenesis. Catalyzes stereospecifically the conversion of dihydroxyacetone phosphate (DHAP) to D-glyceraldehyde-3-phosphate (G3P). In Leptospira borgpetersenii serovar Hardjo-bovis (strain JB197), this protein is Triosephosphate isomerase.